Here is a 434-residue protein sequence, read N- to C-terminus: MADIIIKNGYVLTMDPEVDDIPNGVVVIEGGKIVEVAETTSATANTVIDAQGGVVMPGFVNTHTHAGMTLFRGYADDLPLAQWLQEHIWPAEAELTASDVLAGTRLACLEMIKSGTIAFADMYFFMEEVGKAVEECGLRAALSYGMIELWDDEKGTNELKKGREFVKEWNGKAEGRISVMYGPHAPNTCSKEFLSKVKEQAIADNVKIHIHVLETEAELNQMKEQYGMCSVNMLDTIDFFGPGVLAAHCIWLSDGDMDILADNNVNIAHNPVSNMKLASGVAPVMKLLDKGANVCLGTDGCASNNNLDMFDEMKTAALLQKVDTMDPTALPAKQVLEMATVNGAKALDINSGVLRKDYNADVIIIDMNKAHLSPLFDVPSQLVYSATGNDVRTTIVNGVVLMDERKVLCMNEQQVINDAKQAASDLVSRVDAKN.

Zn(2+) contacts are provided by His-63 and His-65. 2 residues coordinate substrate: Glu-92 and His-184. His-211 serves as a coordination point for Zn(2+). The substrate site is built by Glu-214 and Asp-299. Asp-299 provides a ligand contact to Zn(2+).

The protein belongs to the metallo-dependent hydrolases superfamily. MTA/SAH deaminase family. As to quaternary structure, homotetramer. It depends on Zn(2+) as a cofactor.

It carries out the reaction 5'-deoxyadenosine + H2O + H(+) = 5'-deoxyinosine + NH4(+). It catalyses the reaction S-adenosyl-L-homocysteine + H2O + H(+) = S-inosyl-L-homocysteine + NH4(+). The enzyme catalyses S-methyl-5'-thioadenosine + H2O + H(+) = S-methyl-5'-thioinosine + NH4(+). The catalysed reaction is adenosine + H2O + H(+) = inosine + NH4(+). Its pathway is amino-acid biosynthesis; S-adenosyl-L-methionine biosynthesis. Catalyzes the deamination of three SAM-derived enzymatic products, namely 5'-deoxyadenosine, S-adenosyl-L-homocysteine, and 5'-methylthioadenosine, to produce the inosine analogs. Can also deaminate adenosine. The preferred substrate for this enzyme is 5'-deoxyadenosine, but all these substrates are efficiently deaminated. Likely functions in a S-adenosyl-L-methionine (SAM) recycling pathway from S-adenosyl-L-homocysteine (SAH) produced from SAM-dependent methylation reactions. May also be involved in the recycling of 5'-deoxyadenosine, whereupon the 5'-deoxyribose moiety of 5'-deoxyinosine is further metabolized to deoxyhexoses used for the biosynthesis of aromatic amino acids in methanogens. In Methanococcoides burtonii (strain DSM 6242 / NBRC 107633 / OCM 468 / ACE-M), this protein is 5'-deoxyadenosine deaminase.